The sequence spans 428 residues: Type II methyltransferase M.TthHB8I (428 aa).

The tract at residues R407–F428 is disordered.

The protein belongs to the N(4)/N(6)-methyltransferase family.

The catalysed reaction is a 2'-deoxyadenosine in DNA + S-adenosyl-L-methionine = an N(6)-methyl-2'-deoxyadenosine in DNA + S-adenosyl-L-homocysteine + H(+). In terms of biological role, a gamma subtype methylase, recognizes the double-stranded sequence 5'-TCGA-3', methylates A-4 on both strands and protects the DNA from cleavage by the TthHB8I endonuclease. This Thermus thermophilus (strain ATCC 27634 / DSM 579 / HB8) protein is Type II methyltransferase M.TthHB8I.